Consider the following 523-residue polypeptide: Asparagine--tRNA ligase (523 aa).

The interval 329–350 (SARGDTPLAARSTARTPPVRTP) is disordered.

This sequence belongs to the class-II aminoacyl-tRNA synthetase family. As to quaternary structure, homodimer.

The protein localises to the cytoplasm. It catalyses the reaction tRNA(Asn) + L-asparagine + ATP = L-asparaginyl-tRNA(Asn) + AMP + diphosphate + H(+). This Treponema pallidum (strain Nichols) protein is Asparagine--tRNA ligase.